A 925-amino-acid polypeptide reads, in one-letter code: Probable disease resistance protein At1g61310 (925 aa).

Residues G25–E69 are a coiled coil. The disordered stretch occupies residues N134–P154. The region spanning S139–V442 is the NB-ARC domain. G181–T188 provides a ligand contact to ATP. LRR repeat units follow at residues A525–S546, E547–Y568, K571–V594, S595–K617, K618–L640, and S641–Q663.

This sequence belongs to the disease resistance NB-LRR family.

Functionally, probable disease resistance protein. This chain is Probable disease resistance protein At1g61310, found in Arabidopsis thaliana (Mouse-ear cress).